A 142-amino-acid polypeptide reads, in one-letter code: Large ribosomal subunit protein uL11 (142 aa).

The protein belongs to the universal ribosomal protein uL11 family. Part of the ribosomal stalk of the 50S ribosomal subunit. Interacts with L10 and the large rRNA to form the base of the stalk. L10 forms an elongated spine to which L12 dimers bind in a sequential fashion forming a multimeric L10(L12)X complex. In terms of processing, one or more lysine residues are methylated.

Its function is as follows. Forms part of the ribosomal stalk which helps the ribosome interact with GTP-bound translation factors. This chain is Large ribosomal subunit protein uL11, found in Mycolicibacterium vanbaalenii (strain DSM 7251 / JCM 13017 / BCRC 16820 / KCTC 9966 / NRRL B-24157 / PYR-1) (Mycobacterium vanbaalenii).